Here is a 141-residue protein sequence, read N- to C-terminus: Hemoglobin subunit alpha-1/2/3 (141 aa).

The Globin domain maps to 1-141; sequence VLSPADKTNV…VGTVLTSKYR (141 aa). S3 is modified (phosphoserine). K7 bears the N6-succinyllysine mark. Residue T8 is modified to Phosphothreonine. Residue K11 is modified to N6-succinyllysine. N6-acetyllysine; alternate is present on K16. K16 bears the N6-succinyllysine; alternate mark. Y24 is modified (phosphotyrosine). At S35 the chain carries Phosphoserine. K40 bears the N6-succinyllysine mark. S49 is modified (phosphoserine). H58 provides a ligand contact to O2. H87 contributes to the heme b binding site. S102 bears the Phosphoserine mark. A Phosphothreonine modification is found at T108. A phosphoserine mark is found at S124 and S131. 2 positions are modified to phosphothreonine: T134 and T137. S138 carries the phosphoserine modification.

The protein belongs to the globin family. As to quaternary structure, heterotetramer of two alpha chains and two beta chains. Red blood cells.

Involved in oxygen transport from the lung to the various peripheral tissues. This is Hemoglobin subunit alpha-1/2/3 from Macaca nemestrina (Pig-tailed macaque).